Here is a 349-residue protein sequence, read N- to C-terminus: S-adenosylmethionine:tRNA ribosyltransferase-isomerase (349 aa).

It belongs to the QueA family. As to quaternary structure, monomer.

The protein localises to the cytoplasm. The enzyme catalyses 7-aminomethyl-7-carbaguanosine(34) in tRNA + S-adenosyl-L-methionine = epoxyqueuosine(34) in tRNA + adenine + L-methionine + 2 H(+). Its pathway is tRNA modification; tRNA-queuosine biosynthesis. Functionally, transfers and isomerizes the ribose moiety from AdoMet to the 7-aminomethyl group of 7-deazaguanine (preQ1-tRNA) to give epoxyqueuosine (oQ-tRNA). The polypeptide is S-adenosylmethionine:tRNA ribosyltransferase-isomerase (Pseudomonas putida (strain W619)).